Consider the following 137-residue polypeptide: Competence protein ComGG (137 aa).

The chain crosses the membrane as a helical span at residues 10-30; sequence GVLLYAVTIAAIFSLLLQFYL. A disordered region spans residues 106–137; the sequence is EKRDKKEEVATDSSEKVEKKKSEEKPEKKENS.

As to quaternary structure, the transformation pili are flexible filaments, consisting mainly of the major pilin ComGC and smaller amounts of the minor pilins, including at least ComGD, ComGF and ComGG, and perhaps ComGE. Interacts with ComGC; the interaction is probably direct. Interacts with ComGD. Interacts with ComGE. Interacts with ComGF. May act as a link between ComGC, ComGD and ComGF.

The protein localises to the fimbrium. The protein resides in the cell membrane. Functionally, required for formation of the type IV-like pilus (T4P) that plays a role in transformation. Transformation pili are dynamically extended and retracted, perhaps thereby promoting DNA uptake and transformation. Required for transformation. The sequence is that of Competence protein ComGG from Streptococcus pneumoniae (strain ATCC BAA-255 / R6).